The primary structure comprises 430 residues: Enolase (430 aa).

Glutamine 165 contacts (2R)-2-phosphoglycerate. Glutamate 207 serves as the catalytic Proton donor. Residues aspartate 244, glutamate 287, and aspartate 314 each coordinate Mg(2+). 4 residues coordinate (2R)-2-phosphoglycerate: lysine 339, arginine 368, serine 369, and lysine 390. Lysine 339 serves as the catalytic Proton acceptor.

This sequence belongs to the enolase family. Component of the RNA degradosome, a multiprotein complex involved in RNA processing and mRNA degradation. Mg(2+) serves as cofactor.

It localises to the cytoplasm. The protein localises to the secreted. It is found in the cell surface. It catalyses the reaction (2R)-2-phosphoglycerate = phosphoenolpyruvate + H2O. The protein operates within carbohydrate degradation; glycolysis; pyruvate from D-glyceraldehyde 3-phosphate: step 4/5. In terms of biological role, catalyzes the reversible conversion of 2-phosphoglycerate (2-PG) into phosphoenolpyruvate (PEP). It is essential for the degradation of carbohydrates via glycolysis. In Stenotrophomonas maltophilia (strain R551-3), this protein is Enolase.